The chain runs to 439 residues: Probable anion transporter 7 (439 aa).

Positions 1–28 (MTALTRMKFPKRYVIVLLTFICTNVCYI) are cleaved as a signal peptide. Helical transmembrane passes span 53-73 (MILS…GWAA), 81-101 (VLLL…LDPK), 104-124 (VILV…FPAI), 143-163 (LTTS…PSLV), 167-187 (GAQS…VIWL), 232-252 (IIFS…HYAL), 280-300 (LPYF…DHLI), 312-332 (KLLN…LPLF), 338-358 (TVLC…GFAV), 367-387 (FAGI…IVGV), and 412-432 (TVFF…LIFS).

Belongs to the major facilitator superfamily. Sodium/anion cotransporter (TC 2.A.1.14) family.

It localises to the cell membrane. Its function is as follows. Probable anion transporter. The protein is Probable anion transporter 7 (PHT4;7) of Oryza sativa subsp. japonica (Rice).